The chain runs to 402 residues: Argininosuccinate synthase (402 aa).

Residue 8 to 16 participates in ATP binding; the sequence is AYSGGLDTS. Residues Tyr-86 and Ser-91 each coordinate L-citrulline. An ATP-binding site is contributed by Gly-116. Thr-118, Asn-122, and Asp-123 together coordinate L-aspartate. Asn-122 provides a ligand contact to L-citrulline. The L-citrulline site is built by Arg-126, Ser-175, Ser-184, Glu-260, and Tyr-272.

Belongs to the argininosuccinate synthase family. Type 1 subfamily. In terms of assembly, homotetramer.

It localises to the cytoplasm. The enzyme catalyses L-citrulline + L-aspartate + ATP = 2-(N(omega)-L-arginino)succinate + AMP + diphosphate + H(+). It participates in amino-acid biosynthesis; L-arginine biosynthesis; L-arginine from L-ornithine and carbamoyl phosphate: step 2/3. The chain is Argininosuccinate synthase from Clostridium novyi (strain NT).